The following is a 56-amino-acid chain: Large ribosomal subunit protein eL37 (56 aa).

Zn(2+) is bound by residues Cys-19, Cys-22, Cys-34, and Cys-37. A C4-type zinc finger spans residues 19-37 (CRRCGRLSYNFNRKTCVAC).

The protein belongs to the eukaryotic ribosomal protein eL37 family. Zn(2+) is required as a cofactor.

Binds to the 23S rRNA. The sequence is that of Large ribosomal subunit protein eL37 from Methanothrix thermoacetophila (strain DSM 6194 / JCM 14653 / NBRC 101360 / PT) (Methanosaeta thermophila).